The sequence spans 212 residues: Imidazole glycerol phosphate synthase subunit HisH (212 aa).

A Glutamine amidotransferase type-1 domain is found at Thr3–Trp212. Cys81 functions as the Nucleophile in the catalytic mechanism. Residues His190 and Glu192 contribute to the active site.

Heterodimer of HisH and HisF.

The protein resides in the cytoplasm. It carries out the reaction 5-[(5-phospho-1-deoxy-D-ribulos-1-ylimino)methylamino]-1-(5-phospho-beta-D-ribosyl)imidazole-4-carboxamide + L-glutamine = D-erythro-1-(imidazol-4-yl)glycerol 3-phosphate + 5-amino-1-(5-phospho-beta-D-ribosyl)imidazole-4-carboxamide + L-glutamate + H(+). The enzyme catalyses L-glutamine + H2O = L-glutamate + NH4(+). It participates in amino-acid biosynthesis; L-histidine biosynthesis; L-histidine from 5-phospho-alpha-D-ribose 1-diphosphate: step 5/9. Its function is as follows. IGPS catalyzes the conversion of PRFAR and glutamine to IGP, AICAR and glutamate. The HisH subunit catalyzes the hydrolysis of glutamine to glutamate and ammonia as part of the synthesis of IGP and AICAR. The resulting ammonia molecule is channeled to the active site of HisF. The protein is Imidazole glycerol phosphate synthase subunit HisH of Pseudomonas putida (strain ATCC 47054 / DSM 6125 / CFBP 8728 / NCIMB 11950 / KT2440).